Here is a 393-residue protein sequence, read N- to C-terminus: Phosphopentomutase (393 aa).

Mn(2+) is bound by residues Asp13, Asp286, His291, Asp327, His328, and His339.

Belongs to the phosphopentomutase family. Mn(2+) is required as a cofactor.

The protein localises to the cytoplasm. The enzyme catalyses 2-deoxy-alpha-D-ribose 1-phosphate = 2-deoxy-D-ribose 5-phosphate. It catalyses the reaction alpha-D-ribose 1-phosphate = D-ribose 5-phosphate. The protein operates within carbohydrate degradation; 2-deoxy-D-ribose 1-phosphate degradation; D-glyceraldehyde 3-phosphate and acetaldehyde from 2-deoxy-alpha-D-ribose 1-phosphate: step 1/2. Isomerase that catalyzes the conversion of deoxy-ribose 1-phosphate (dRib-1-P) and ribose 1-phosphate (Rib-1-P) to deoxy-ribose 5-phosphate (dRib-5-P) and ribose 5-phosphate (Rib-5-P), respectively. The polypeptide is Phosphopentomutase (Symbiobacterium thermophilum (strain DSM 24528 / JCM 14929 / IAM 14863 / T)).